Here is a 308-residue protein sequence, read N- to C-terminus: HTH-type transcriptional activator AllS (308 aa).

In terms of domain architecture, HTH lysR-type spans 2-59 (FDPETLRTFIAVAETGSFSKAAERLCKTTATISYRIKLLEENTGVALFFRTTRSVTLT). A DNA-binding region (H-T-H motif) is located at residues 19-38 (FSKAAERLCKTTATISYRIK).

It belongs to the LysR transcriptional regulatory family.

Functionally, positive regulator essential for the expression of AllD operon. Binds to the AllD promoter. The sequence is that of HTH-type transcriptional activator AllS (allS) from Escherichia coli O157:H7.